We begin with the raw amino-acid sequence, 874 residues long: Alanine--tRNA ligase (874 aa).

The Zn(2+) site is built by H564, H568, C665, and H669.

Belongs to the class-II aminoacyl-tRNA synthetase family. Requires Zn(2+) as cofactor.

Its subcellular location is the cytoplasm. It catalyses the reaction tRNA(Ala) + L-alanine + ATP = L-alanyl-tRNA(Ala) + AMP + diphosphate. In terms of biological role, catalyzes the attachment of alanine to tRNA(Ala) in a two-step reaction: alanine is first activated by ATP to form Ala-AMP and then transferred to the acceptor end of tRNA(Ala). Also edits incorrectly charged Ser-tRNA(Ala) and Gly-tRNA(Ala) via its editing domain. This is Alanine--tRNA ligase from Cupriavidus necator (strain ATCC 17699 / DSM 428 / KCTC 22496 / NCIMB 10442 / H16 / Stanier 337) (Ralstonia eutropha).